We begin with the raw amino-acid sequence, 189 residues long: GTP cyclohydrolase 1 (189 aa).

Zn(2+)-binding residues include Cys-79, His-82, and Cys-150.

It belongs to the GTP cyclohydrolase I family. In terms of assembly, homomer.

The catalysed reaction is GTP + H2O = 7,8-dihydroneopterin 3'-triphosphate + formate + H(+). It participates in cofactor biosynthesis; 7,8-dihydroneopterin triphosphate biosynthesis; 7,8-dihydroneopterin triphosphate from GTP: step 1/1. The sequence is that of GTP cyclohydrolase 1 from Rickettsia africae (strain ESF-5).